A 269-amino-acid polypeptide reads, in one-letter code: 4-hydroxy-tetrahydrodipicolinate reductase (269 aa).

NAD(+) contacts are provided by residues 8–13 (GAAGRM), Glu-34, 98–100 (GTT), and 122–125 (APNY). His-155 (proton donor/acceptor) is an active-site residue. His-156 provides a ligand contact to (S)-2,3,4,5-tetrahydrodipicolinate. The active-site Proton donor is Lys-159. (S)-2,3,4,5-tetrahydrodipicolinate is bound at residue 165-166 (GT).

The protein belongs to the DapB family.

It localises to the cytoplasm. It carries out the reaction (S)-2,3,4,5-tetrahydrodipicolinate + NAD(+) + H2O = (2S,4S)-4-hydroxy-2,3,4,5-tetrahydrodipicolinate + NADH + H(+). The enzyme catalyses (S)-2,3,4,5-tetrahydrodipicolinate + NADP(+) + H2O = (2S,4S)-4-hydroxy-2,3,4,5-tetrahydrodipicolinate + NADPH + H(+). It participates in amino-acid biosynthesis; L-lysine biosynthesis via DAP pathway; (S)-tetrahydrodipicolinate from L-aspartate: step 4/4. Catalyzes the conversion of 4-hydroxy-tetrahydrodipicolinate (HTPA) to tetrahydrodipicolinate. This Aliivibrio salmonicida (strain LFI1238) (Vibrio salmonicida (strain LFI1238)) protein is 4-hydroxy-tetrahydrodipicolinate reductase.